A 145-amino-acid polypeptide reads, in one-letter code: Large ribosomal subunit protein uL13 (145 aa).

Belongs to the universal ribosomal protein uL13 family. As to quaternary structure, part of the 50S ribosomal subunit.

Its function is as follows. This protein is one of the early assembly proteins of the 50S ribosomal subunit, although it is not seen to bind rRNA by itself. It is important during the early stages of 50S assembly. This Bacillus pumilus (strain SAFR-032) protein is Large ribosomal subunit protein uL13.